The primary structure comprises 348 residues: MPSAIPMLYLPDTMSAWPWQRAINPYFNEVKAASNSWFKSFRAFSPASQKAFDKCDFCLLAALAYPRARKEHLRTGCDLMNLFFVIDEYTDVEDANVCRDMVDIVIDALRRPHDPRPEGEVVLGEIARQFWARAIETASPTSQRRFLETFIAYLESVVLQAADRDCDAEHTVQTYLAQRRDNIGSYPSYAVLELALDIPDDVFYHPAMNELSLYATEMLIIDNDLVSYNREQASGDTNNILFVIMRQFNCSLDHAMAWAAAYHSQLEARFMDAFKRMPSWGLEIDSQVEEYCQGIANWPRGNDCWSFESGRYFGDKGREVQKTRCVPLLPKKERDTSLRQQDVVITSL.

Positions 87, 223, 227, and 231 each coordinate Mg(2+). The DDXXD motif motif lies at 87 to 91 (DEYTD). Positions 223-231 (NDLVSYNRE) match the NSE/DTE motif motif. The (2E,6E)-farnesyl diphosphate site is built by Arg-311 and Tyr-312.

This sequence belongs to the terpene synthase family. Requires Mg(2+) as cofactor.

It catalyses the reaction (2E,6E)-farnesyl diphosphate = Delta(6)-protoilludene + diphosphate. Functionally, terpene cyclase that catalyzes the cyclization of farnesyl diphosphate (FPP) to delta(6)-protoilludene. The protein is Delta(6)-protoilludene synthase 18 of Postia placenta (strain ATCC 44394 / Madison 698-R) (Brown rot fungus).